A 361-amino-acid chain; its full sequence is 3-dehydroquinate synthase (361 aa).

NAD(+) is bound by residues 72 to 77 (SGEKEK), 130 to 131 (TT), Lys142, and Lys151. Residues Glu184, His247, and His264 each coordinate Zn(2+).

Belongs to the sugar phosphate cyclases superfamily. Dehydroquinate synthase family. It depends on Co(2+) as a cofactor. Zn(2+) is required as a cofactor. The cofactor is NAD(+).

It is found in the cytoplasm. The enzyme catalyses 7-phospho-2-dehydro-3-deoxy-D-arabino-heptonate = 3-dehydroquinate + phosphate. Its pathway is metabolic intermediate biosynthesis; chorismate biosynthesis; chorismate from D-erythrose 4-phosphate and phosphoenolpyruvate: step 2/7. In terms of biological role, catalyzes the conversion of 3-deoxy-D-arabino-heptulosonate 7-phosphate (DAHP) to dehydroquinate (DHQ). The sequence is that of 3-dehydroquinate synthase from Bacillus cereus (strain G9842).